We begin with the raw amino-acid sequence, 431 residues long: Tryptophan synthase beta chain 2 (431 aa).

K111 is modified (N6-(pyridoxal phosphate)lysine).

The protein belongs to the TrpB family. As to quaternary structure, tetramer of two alpha and two beta chains. Requires pyridoxal 5'-phosphate as cofactor.

It catalyses the reaction (1S,2R)-1-C-(indol-3-yl)glycerol 3-phosphate + L-serine = D-glyceraldehyde 3-phosphate + L-tryptophan + H2O. The protein operates within amino-acid biosynthesis; L-tryptophan biosynthesis; L-tryptophan from chorismate: step 5/5. Functionally, the beta subunit is responsible for the synthesis of L-tryptophan from indole and L-serine. This chain is Tryptophan synthase beta chain 2 (trpB2), found in Sulfurisphaera tokodaii (strain DSM 16993 / JCM 10545 / NBRC 100140 / 7) (Sulfolobus tokodaii).